A 69-amino-acid polypeptide reads, in one-letter code: DPEELTSHSYKPLGSGFFGLMGNRLPVSFLDLARAHPFTGTGLHLQMQEAPCDYRHGNRFEGGAPAAKA.

This chain is ATP synthase subunits region ORF 1, found in Fuscovulum blasticum (Rhodobacter blasticus).